The sequence spans 38 residues: Photosystem II reaction center protein L (38 aa).

Residues 17-37 (SLFWGLLLIFVLAVLFSSYFF) form a helical membrane-spanning segment.

It belongs to the PsbL family. PSII is composed of 1 copy each of membrane proteins PsbA, PsbB, PsbC, PsbD, PsbE, PsbF, PsbH, PsbI, PsbJ, PsbK, PsbL, PsbM, PsbT, PsbX, PsbY, PsbZ, Psb30/Ycf12, at least 3 peripheral proteins of the oxygen-evolving complex and a large number of cofactors. It forms dimeric complexes.

The protein localises to the plastid. It is found in the chloroplast thylakoid membrane. Functionally, one of the components of the core complex of photosystem II (PSII). PSII is a light-driven water:plastoquinone oxidoreductase that uses light energy to abstract electrons from H(2)O, generating O(2) and a proton gradient subsequently used for ATP formation. It consists of a core antenna complex that captures photons, and an electron transfer chain that converts photonic excitation into a charge separation. This subunit is found at the monomer-monomer interface and is required for correct PSII assembly and/or dimerization. This is Photosystem II reaction center protein L from Rhodomonas salina (Cryptomonas salina).